A 695-amino-acid chain; its full sequence is Pre-mRNA-splicing factor CLF1 (695 aa).

12 HAT repeats span residues 41–73 (DVQRRKRTEFEGYLKRNRLDVKQWMRYAVFEIE), 75–107 (HDMRRARSIFERALRVHISYVPLWIRYIESELK), 109–141 (GYINHARNILERAITKLPRVDKLWYKYLIVEES), 143–174 (AHFDIVRNLFQKWCSLEPAAHVWDSFTDFEVR), 176–207 (ERYEDVRNIYSKYVLIHPQFSTWRKWINFEVR), 296–328 (TIILNRKKHYEDILNEKVYDYDTWLLYLQLLEN), 333–365 (LVMEAFSNVLNAAIPTSRTKDKYWKQYILIWIK), 375–412 (NDIPLCGQKFEELIHNIIPNDDFTFSKIWILYAEFEIR), 414–445 (DNLEKARSILGRSLGLCPKRKTFKYYIDLETK), 447–479 (REFDRVRILYENFLKFDPLNLDTWRAYVEFEDS), 521–553 (QNFDNIEPLLKKQVELSNFTVEAWTDYAMKKLT), and 591–629 (NNKDNARDVFERALNYFKEIKRDEDRARILQSYVDFEGQ).

Belongs to the crooked-neck family. As to quaternary structure, associated with the spliceosome.

It is found in the nucleus. In terms of biological role, involved in pre-mRNA splicing and cell cycle progression. Required for the spliceosome assembly and initiation of the DNA replication. The protein is Pre-mRNA-splicing factor CLF1 (CLF1) of Candida glabrata (strain ATCC 2001 / BCRC 20586 / JCM 3761 / NBRC 0622 / NRRL Y-65 / CBS 138) (Yeast).